We begin with the raw amino-acid sequence, 230 residues long: MRLVIARCSVDYIGRLEAHLPMADRLLMVKADGSVSIHADDRAYKPLNWMTPPCTLTETPITDEDGEEVGVHLWVVENKKGEQLRITVEKIHSELSHDLGVDPGLVKDGVEDHLQELLAEHITTLGEGYTLVRREYPTAIGPVDILCRDADGQTVAVEIKRRGNIDGVEQLSRYLELLNRDELLKPVQGVFAAQEIKPQARTLAEDRGIRCVTLDYQTLRGIESNELTLF.

Belongs to the NucS endonuclease family.

It is found in the cytoplasm. Functionally, cleaves both 3' and 5' ssDNA extremities of branched DNA structures. The protein is Endonuclease NucS of Corynebacterium efficiens (strain DSM 44549 / YS-314 / AJ 12310 / JCM 11189 / NBRC 100395).